An 82-amino-acid chain; its full sequence is ATP synthase subunit c (82 aa).

2 helical membrane-spanning segments follow: residues Ala-6–Ile-26 and Leu-57–Ala-77.

Belongs to the ATPase C chain family. As to quaternary structure, F-type ATPases have 2 components, F(1) - the catalytic core - and F(0) - the membrane proton channel. F(1) has five subunits: alpha(3), beta(3), gamma(1), delta(1), epsilon(1). F(0) has four main subunits: a(1), b(1), b'(1) and c(10-14). The alpha and beta chains form an alternating ring which encloses part of the gamma chain. F(1) is attached to F(0) by a central stalk formed by the gamma and epsilon chains, while a peripheral stalk is formed by the delta, b and b' chains.

The protein resides in the cell inner membrane. F(1)F(0) ATP synthase produces ATP from ADP in the presence of a proton or sodium gradient. F-type ATPases consist of two structural domains, F(1) containing the extramembraneous catalytic core and F(0) containing the membrane proton channel, linked together by a central stalk and a peripheral stalk. During catalysis, ATP synthesis in the catalytic domain of F(1) is coupled via a rotary mechanism of the central stalk subunits to proton translocation. Functionally, key component of the F(0) channel; it plays a direct role in translocation across the membrane. A homomeric c-ring of between 10-14 subunits forms the central stalk rotor element with the F(1) delta and epsilon subunits. The chain is ATP synthase subunit c from Gloeobacter violaceus (strain ATCC 29082 / PCC 7421).